The sequence spans 411 residues: Putative nickel insertion protein (411 aa).

This sequence belongs to the LarC family.

The chain is Putative nickel insertion protein from Methanothermobacter thermautotrophicus (strain ATCC 29096 / DSM 1053 / JCM 10044 / NBRC 100330 / Delta H) (Methanobacterium thermoautotrophicum).